Here is a 490-residue protein sequence, read N- to C-terminus: ATP-dependent 6-phosphofructokinase (490 aa).

ATP-binding positions include glycine 109, 175-176, and 200-203; these read RG and GDGT. Aspartate 201 provides a ligand contact to Mg(2+). Residues 229–231, 274–276, glutamate 327, and 383–386 each bind substrate; these read TID, MGR, and YMIR. Aspartate 231 serves as the catalytic Proton acceptor. Positions 488–490 match the Peroxisomal targeting signal motif; the sequence is SKL.

The protein belongs to the phosphofructokinase type A (PFKA) family. PPi-dependent PFK group II subfamily. Atypical ATP-dependent clade 'X' sub-subfamily. Homotetramer. The cofactor is Mg(2+).

The protein localises to the glycosome. It carries out the reaction beta-D-fructose 6-phosphate + ATP = beta-D-fructose 1,6-bisphosphate + ADP + H(+). It participates in carbohydrate degradation; glycolysis; D-glyceraldehyde 3-phosphate and glycerone phosphate from D-glucose: step 3/4. Allosterically activated by AMP. Functionally, catalyzes the phosphorylation of D-fructose 6-phosphate to fructose 1,6-bisphosphate by ATP, the first committing step of glycolysis. This chain is ATP-dependent 6-phosphofructokinase, found in Trypanoplasma borreli.